The sequence spans 96 residues: UPF0235 protein Spro_4033 (96 aa).

Belongs to the UPF0235 family.

The sequence is that of UPF0235 protein Spro_4033 from Serratia proteamaculans (strain 568).